We begin with the raw amino-acid sequence, 303 residues long: Probable WRKY transcription factor 30 (303 aa).

The disordered stretch occupies residues 65–92 (DQVSQGGGSPKSDDSDQEPLVIKSSKKS). Residues 107–175 (GVDRTLDDGF…YRGIHSCSQA (69 aa)) constitute a DNA-binding region (WRKY). Over residues 266-278 (SGSASHSASNSPS) the composition is skewed to low complexity. The interval 266 to 291 (SGSASHSASNSPSTVPLESPFESYDP) is disordered.

This sequence belongs to the WRKY group III family. In terms of assembly, interacts with WRKY53, WRKY54 and WRKY70.

The protein localises to the nucleus. In terms of biological role, transcription factor. Interacts specifically with the W box (5'-(T)TGAC[CT]-3'), a frequently occurring elicitor-responsive cis-acting element. The protein is Probable WRKY transcription factor 30 of Arabidopsis thaliana (Mouse-ear cress).